A 188-amino-acid polypeptide reads, in one-letter code: Peptide deformylase (188 aa).

Residues cysteine 109 and histidine 152 each coordinate Fe cation. Residue glutamate 153 is part of the active site. Histidine 156 contributes to the Fe cation binding site.

This sequence belongs to the polypeptide deformylase family. The cofactor is Fe(2+).

It catalyses the reaction N-terminal N-formyl-L-methionyl-[peptide] + H2O = N-terminal L-methionyl-[peptide] + formate. Functionally, removes the formyl group from the N-terminal Met of newly synthesized proteins. Requires at least a dipeptide for an efficient rate of reaction. N-terminal L-methionine is a prerequisite for activity but the enzyme has broad specificity at other positions. The polypeptide is Peptide deformylase (Chloroflexus aggregans (strain MD-66 / DSM 9485)).